Here is a 263-residue protein sequence, read N- to C-terminus: Probable ABC transporter permease protein ycf63 (263 aa).

5 helical membrane-spanning segments follow: residues 43–63 (IVGP…SMVF), 70–89 (EFLY…IAFT), 150–170 (ILSI…AFVM), 188–208 (ISDF…IGFI), and 230–250 (SVVT…YFMF).

The protein belongs to the MlaE permease family.

The protein localises to the plastid. Its subcellular location is the chloroplast membrane. In terms of biological role, could be part of an ABC transporter complex. This is Probable ABC transporter permease protein ycf63 (ycf63) from Pyropia yezoensis (Susabi-nori).